The following is a 194-amino-acid chain: Lymphocyte antigen 6 complex locus protein G5b (194 aa).

The first 18 residues, 1–18, serve as a signal peptide directing secretion; the sequence is MRARVLVGMLTMVGFAMG. The UPAR/Ly6 domain occupies 26 to 118; that stretch reads RTCHLCLLED…SAQHQSTLRG (93 aa). 5 disulfides stabilise this stretch: Cys28–Cys55, Cys31–Cys40, Cys47–Cys73, Cys81–Cys98, and Cys99–Cys104. An N-linked (GlcNAc...) asparagine glycan is attached at Asn63. An N-linked (GlcNAc...) asparagine glycan is attached at Asn141.

As to quaternary structure, monomer. Post-translationally, N-glycosylated.

It localises to the secreted. In Mus musculus (Mouse), this protein is Lymphocyte antigen 6 complex locus protein G5b (Ly6g5b).